The sequence spans 172 residues: Major exported protein (172 aa).

Belongs to the hcp1 family.

The protein resides in the secreted. This chain is Major exported protein (hcpA), found in Pseudomonas aeruginosa (strain ATCC 15692 / DSM 22644 / CIP 104116 / JCM 14847 / LMG 12228 / 1C / PRS 101 / PAO1).